We begin with the raw amino-acid sequence, 226 residues long: Ribonuclease 3 (226 aa).

The region spanning 6–128 (INRLQRKLGY…LIGGIFLDSD (123 aa)) is the RNase III domain. Position 41 (Glu-41) interacts with Mg(2+). Asp-45 is an active-site residue. 2 residues coordinate Mg(2+): Asp-114 and Glu-117. Glu-117 is a catalytic residue. The DRBM domain maps to 155-225 (DPKTRLQEFL…AEQALKQLEL (71 aa)).

The protein belongs to the ribonuclease III family. Homodimer. Mg(2+) is required as a cofactor.

The protein localises to the cytoplasm. The catalysed reaction is Endonucleolytic cleavage to 5'-phosphomonoester.. Digests double-stranded RNA. Involved in the processing of primary rRNA transcript to yield the immediate precursors to the large and small rRNAs (23S and 16S). Processes some mRNAs, and tRNAs when they are encoded in the rRNA operon. Processes pre-crRNA and tracrRNA of type II CRISPR loci if present in the organism. The sequence is that of Ribonuclease 3 from Edwardsiella ictaluri (strain 93-146).